Consider the following 625-residue polypeptide: Clathrin interactor 1 (625 aa).

Residues 16–149 form the ENTH domain; it reads NVVMNYSEIE…QDDDRLREER (134 aa). A 1,2-diacyl-sn-glycero-3-phospho-(1D-myo-inositol-4,5-bisphosphate) is bound at residue R29. An interaction with VTI1B region spans residues 52 to 54; the sequence is FMY. R67 lines the a 1,2-diacyl-sn-glycero-3-phospho-(1D-myo-inositol-4,5-bisphosphate) pocket. Interaction with VTI1B stretches follow at residues 94–96 and 142–153; these read SER and DDRLREERKKAK. Residues S163, S166, S173, S205, S210, S227, S245, and S299 each carry the phosphoserine modification. The segment at 219 to 331 is disordered; that stretch reads FRRKDREDSP…SSGDLVDLFD (113 aa). Positions 222–239 are enriched in basic and acidic residues; it reads KDREDSPERCSDSDEEKK. T308 is modified (phosphothreonine). Residues 308 to 323 show a composition bias toward low complexity; it reads TPQSSVKTSVPSSKSS. S312 is subject to Phosphoserine. The interaction with AP1G1, AP1G2 and GGA2 stretch occupies residues 340–352; that stretch reads SADLFGGFADFGS. Residues 368 to 380 form an interaction with AP1G1 and AP1G2 region; sequence GNGDFGDWSAFNQ. The residue at position 624 (S624) is a Phosphoserine.

The protein belongs to the epsin family. As to quaternary structure, binds clathrin heavy chain and AP-2. Interacts with VTI1B. Interacts with GGA2 (via GAE domain). Interacts with AP1G1 (via GAE domain). Interacts with AP1G2 (via GAE domain). In terms of tissue distribution, ubiquitously expressed at low to intermediate levels.

The protein resides in the cytoplasm. It is found in the perinuclear region. It localises to the membrane. Its subcellular location is the cytoplasmic vesicle. The protein localises to the clathrin-coated vesicle. Its function is as follows. Binds to membranes enriched in phosphatidylinositol 4,5-bisphosphate (PtdIns(4,5)P2). May have a role in transport via clathrin-coated vesicles from the trans-Golgi network to endosomes. Stimulates clathrin assembly. This is Clathrin interactor 1 (CLINT1) from Homo sapiens (Human).